Here is a 137-residue protein sequence, read N- to C-terminus: MVSFRTMWSLVVVVVVVAASLGSSGVHGRSVEGSSRMERLLSSGSSSSEPLSFLSQDQSVNKRQVFDQACKGIYDRAIFKKLDRVCEDCYNLYRKPYVATTCRQNCYANSVFRQCLDDLLLIDVVDEYISGVQTVGK.

A signal peptide spans Met-1 to Gly-28. Residue Gln-64 is modified to Pyrrolidone carboxylic acid. Phe-66 carries the D-phenylalanine; in form CHH-II modification. 3 disulfide bridges follow: Cys-70–Cys-106, Cys-86–Cys-102, and Cys-89–Cys-115. Val-135 carries the valine amide modification.

This sequence belongs to the arthropod CHH/MIH/GIH/VIH hormone family. As to expression, produced by the medulla terminalis X-organ in the eyestalks and transported to the sinus gland where they are stored and released.

It localises to the secreted. Its function is as follows. Hormone found in the sinus gland of isopods and decapods which controls the blood sugar level. Has a secretagogue action over the amylase released from the midgut gland. May act as a stress hormone and may be involved in the control of molting and reproduction. In Procambarus clarkii (Red swamp crayfish), this protein is Crustacean hyperglycemic hormones.